Consider the following 203-residue polypeptide: MKIQRKFYEKSALQVAKYLLGKILVNEVEGITLKGKIVETEAYIGAIDKASHAYGGKKTERVMPLYGKPGTAYVYLIYGMYHCFNVITKVEGEAEGVLIRAIEPLEGIEKMAYLRYKKPISEISKTQFKNLTTGPGKLCIALNIDKSNNKQDLCNEGTLYIEHNDKEKFNIVESKRIGIEYAEEAKDFLWRFYIEDNPWISKK.

This sequence belongs to the DNA glycosylase MPG family.

In Clostridium tetani (strain Massachusetts / E88), this protein is Putative 3-methyladenine DNA glycosylase.